The primary structure comprises 540 residues: Maintenance of mitochondrial morphology protein 1 (540 aa).

Over 1-25 the chain is Lumenal; the sequence is MAGPSNQTQPPPPVLTQPSLSFTQG. A helical transmembrane segment spans residues 26–46; that stretch reads LLVGQLSVVLLIGAFIKFFIF. Over 47-540 the chain is Cytoplasmic; that stretch reads GEAPPHPSRN…GSMPDPVVVT (494 aa). Disordered regions lie at residues 52–135, 275–331, 416–471, and 509–540; these read HPSR…SHQP, GPGT…ATAA, GRTG…GGSM, and YGGAQGGGGGGGRGGEEQFAIPGSMPDPVVVT. Polar residues-rich tracts occupy residues 69-81, 88-105, and 112-121; these read YSLNSISADSSPR, STSNILRPVPSSSTNTRS, and YSATPTNPTS. Basic residues predominate over residues 122–132; sequence KHSRSRPHHSS. Residues 134 to 409 enclose the SMP-LTD domain; sequence QPESLDWFNV…EPRVQVVGLP (276 aa). A compositionally biased stretch (low complexity) spans 321–331; the sequence is TNTNTAGATAA. Gly residues-rich tracts occupy residues 442–471 and 511–521; these read TAGGDGVGVRGGGGGGGGGGGVGGSGGGSM and GAQGGGGGGGR.

It belongs to the MMM1 family. Homodimer. Component of the ER-mitochondria encounter structure (ERMES) or MDM complex, composed of MMM1, MDM10, MDM12 and MDM34. An MMM1 homodimer associates with one molecule of MDM12 on each side in a pairwise head-to-tail manner, and the SMP-LTD domains of MMM1 and MDM12 generate a continuous hydrophobic tunnel for phospholipid trafficking.

The protein localises to the endoplasmic reticulum membrane. Its function is as follows. Component of the ERMES/MDM complex, which serves as a molecular tether to connect the endoplasmic reticulum (ER) and mitochondria. Components of this complex are involved in the control of mitochondrial shape and protein biogenesis, and function in nonvesicular lipid trafficking between the ER and mitochondria. The MDM12-MMM1 subcomplex functions in the major beta-barrel assembly pathway that is responsible for biogenesis of all outer membrane beta-barrel proteins, and acts in a late step after the SAM complex. The MDM10-MDM12-MMM1 subcomplex further acts in the TOM40-specific pathway after the action of the MDM12-MMM1 complex. Essential for establishing and maintaining the structure of mitochondria and maintenance of mtDNA nucleoids. The protein is Maintenance of mitochondrial morphology protein 1 of Blastomyces gilchristii (strain SLH14081) (Blastomyces dermatitidis).